Reading from the N-terminus, the 198-residue chain is Golgi to ER traffic protein 1 (198 aa).

Residues 1–6 are Lumenal-facing; that stretch reads MDPFSI. The chain crosses the membrane as a helical span at residues 7–26; that stretch reads LLTLTLIILAQNAVRIVGKS. Topologically, residues 27–110 are cytoplasmic; it reads QIHQSIWNLY…AIEKYLGLAI (84 aa). Residues 73 to 106 are a coiled coil; that stretch reads KWTKLNRKYDQLQTEIKAVSDQVSQQQQAIEKYL. The helical transmembrane segment at 111 to 131 threads the bilayer; sequence SVTTTLPLWLFRFKYRKQPLF. Over 132-155 the chain is Lumenal; sequence YFPKDTFPSYLEWILSFPSVPQGS. A helical transmembrane segment spans residues 156–172; that stretch reads IGIMFWILLLNKFVSNL. The Cytoplasmic portion of the chain corresponds to 173 to 198; it reads EFIVKTFSTKVEKPVPIVKVEDLSPK.

This sequence belongs to the WRB/GET1 family. Component of the Golgi to ER traffic (GET) complex, which is composed of GET1, GET2 and GET3. Within the complex, GET1 and GET2 form a heterotetramer which is stabilized by phosphatidylinositol binding and which binds to the GET3 homodimer.

It localises to the endoplasmic reticulum membrane. It is found in the golgi apparatus membrane. Required for the post-translational delivery of tail-anchored (TA) proteins to the endoplasmic reticulum. Together with GET2, acts as a membrane receptor for soluble GET3, which recognizes and selectively binds the transmembrane domain of TA proteins in the cytosol. The GET complex cooperates with the HDEL receptor ERD2 to mediate the ATP-dependent retrieval of resident ER proteins that contain a C-terminal H-D-E-L retention signal from the Golgi to the ER. The protein is Golgi to ER traffic protein 1 of Komagataella phaffii (strain GS115 / ATCC 20864) (Yeast).